Here is a 65-residue protein sequence, read N- to C-terminus: Large ribosomal subunit protein uL29 (65 aa).

This sequence belongs to the universal ribosomal protein uL29 family.

This is Large ribosomal subunit protein uL29 from Acidovorax ebreus (strain TPSY) (Diaphorobacter sp. (strain TPSY)).